Reading from the N-terminus, the 62-residue chain is Photosystem II reaction center protein Z (62 aa).

Transmembrane regions (helical) follow at residues 8–28 and 41–61; these read AVFA…VVFA and FSGT…NSLI.

The protein belongs to the PsbZ family. As to quaternary structure, PSII is composed of 1 copy each of membrane proteins PsbA, PsbB, PsbC, PsbD, PsbE, PsbF, PsbH, PsbI, PsbJ, PsbK, PsbL, PsbM, PsbT, PsbY, PsbZ, Psb30/Ycf12, at least 3 peripheral proteins of the oxygen-evolving complex and a large number of cofactors. It forms dimeric complexes.

The protein localises to the plastid. It is found in the chloroplast thylakoid membrane. Its function is as follows. May control the interaction of photosystem II (PSII) cores with the light-harvesting antenna, regulates electron flow through the 2 photosystem reaction centers. PSII is a light-driven water plastoquinone oxidoreductase, using light energy to abstract electrons from H(2)O, generating a proton gradient subsequently used for ATP formation. This chain is Photosystem II reaction center protein Z, found in Panax ginseng (Korean ginseng).